A 287-amino-acid chain; its full sequence is GTPase Era (287 aa).

In terms of domain architecture, Era-type G spans 11–174; sequence RSGFVAVIGR…RSYLASSLPE (164 aa). GTP-binding positions include 19 to 26 and 66 to 70; these read GRTNVGKS and DTPGI. The region spanning 205-273 is the KH type-2 domain; that stretch reads LRDELPQALA…PLTLRVKVQR (69 aa).

This sequence belongs to the TRAFAC class TrmE-Era-EngA-EngB-Septin-like GTPase superfamily. Era GTPase family. As to quaternary structure, monomer.

It is found in the cytoplasm. The protein resides in the cell membrane. In terms of biological role, an essential GTPase that binds both GDP and GTP, with rapid nucleotide exchange. Plays a role in 16S rRNA processing and 30S ribosomal subunit biogenesis and possibly also in cell cycle regulation and energy metabolism. The polypeptide is GTPase Era (Acidimicrobium ferrooxidans (strain DSM 10331 / JCM 15462 / NBRC 103882 / ICP)).